An 843-amino-acid polypeptide reads, in one-letter code: Elongation factor 2 (843 aa).

The tr-type G domain maps to 17–344 (HNIRNMSVIA…MMIFHLPSPH (328 aa)). GTP is bound by residues 26–33 (AHVDHGKS) and 158–161 (NKMD). Histidine 700 is subject to Diphthamide. A Phosphoserine modification is found at serine 837.

The protein belongs to the TRAFAC class translation factor GTPase superfamily. Classic translation factor GTPase family. As to quaternary structure, may interact with glutaredoxins (Grxs). Expressed in root, stem, leaves, flowers and siliques.

It localises to the cytoplasm. The enzyme catalyses GTP + H2O = GDP + phosphate + H(+). Its pathway is protein biosynthesis; polypeptide chain elongation. In terms of biological role, catalyzes the GTP-dependent ribosomal translocation step during translation elongation. During this step, the ribosome changes from the pre-translocational (PRE) to the post-translocational (POST) state as the newly formed A-site-bound peptidyl-tRNA and P-site-bound deacylated tRNA move to the P and E sites, respectively. Catalyzes the coordinated movement of the two tRNA molecules, the mRNA and conformational changes in the ribosome. Involved in cold responses leading to freezing tolerance via the induction of cold-responsive genes. This Arabidopsis thaliana (Mouse-ear cress) protein is Elongation factor 2.